The chain runs to 148 residues: UPF0540 protein At1g62000 (148 aa).

The N-terminal stretch at 1-21 (MNATKFVVLLVIGILCAIVTA) is a signal peptide. Residues 123 to 132 (RANGKVASAS) are compositionally biased toward low complexity. Positions 123–148 (RANGKVASASRVKGSSEKKKGKGKKD) are disordered.

Belongs to the UPF0540 family.

This is UPF0540 protein At1g62000 from Arabidopsis thaliana (Mouse-ear cress).